Here is a 122-residue protein sequence, read N- to C-terminus: SLLQFNKMIKFETRKNAIPFYAFYGCYCGWGGQGRPKDATDRCCIVHDCCYGKLAKCNTKWDFYRYSLRSGYFQCGKGTWCEQQICECDRVAAECLRRSLSTYRYGYMIYPDSRCREPSETC.

7 disulfide bridges follow: Cys-26-Cys-115, Cys-28-Cys-44, Cys-43-Cys-95, Cys-49-Cys-122, Cys-50-Cys-88, Cys-57-Cys-81, and Cys-75-Cys-86. Ca(2+)-binding residues include Tyr-27, Gly-29, and Gly-31. His-47 is an active-site residue. Position 48 (Asp-48) interacts with Ca(2+). The active site involves Asp-89.

Requires Ca(2+) as cofactor. Expressed by the venom gland.

The protein localises to the secreted. It carries out the reaction a 1,2-diacyl-sn-glycero-3-phosphocholine + H2O = a 1-acyl-sn-glycero-3-phosphocholine + a fatty acid + H(+). Its function is as follows. Snake venom phospholipase A2 (PLA2) that induces myonecrosis and edema upon intramuscular injections in mice. In vitro, causes a potent blockade of neuromuscular transmission in young chicken biventer cervicis preparation and produces cytotoxicity in murine C2C12 skeletal muscle myotubes and lack cytolytic activity upon myoblasts in vitro. PLA2 catalyzes the calcium-dependent hydrolysis of the 2-acyl groups in 3-sn-phosphoglycerides. The polypeptide is Basic phospholipase A2 Cdr-12 (Crotalus durissus ruruima (South American rattlesnake)).